The sequence spans 335 residues: DNA-directed RNA polymerase subunit alpha (335 aa).

The alpha N-terminal domain (alpha-NTD) stretch occupies residues 1-231 (MVREKITVST…DLLIPFLHTK (231 aa)). Residues 263–335 (KKMALKSIFI…FVIDLPKNKF (73 aa)) form an alpha C-terminal domain (alpha-CTD) region.

It belongs to the RNA polymerase alpha chain family. In plastids the minimal PEP RNA polymerase catalytic core is composed of four subunits: alpha, beta, beta', and beta''. When a (nuclear-encoded) sigma factor is associated with the core the holoenzyme is formed, which can initiate transcription.

Its subcellular location is the plastid. The protein localises to the chloroplast. It catalyses the reaction RNA(n) + a ribonucleoside 5'-triphosphate = RNA(n+1) + diphosphate. In terms of biological role, DNA-dependent RNA polymerase catalyzes the transcription of DNA into RNA using the four ribonucleoside triphosphates as substrates. The sequence is that of DNA-directed RNA polymerase subunit alpha from Lactuca sativa (Garden lettuce).